Reading from the N-terminus, the 381-residue chain is Creatine kinase M-type (381 aa).

The Phosphagen kinase N-terminal domain maps to 11-98 (KLNYSAAEEF…FDPVIEDRHG (88 aa)). The Phosphagen kinase C-terminal domain occupies 125 to 367 (YVLSSRVRTG…KLMVEMEKRL (243 aa)). Residues 128 to 132 (SSRVR), histidine 191, arginine 236, arginine 292, 320 to 325 (RGTGGV), and aspartate 335 each bind ATP.

Belongs to the ATP:guanido phosphotransferase family. In terms of assembly, dimer of identical or non-identical chains. With MM being the major form in skeletal muscle and myocardium, MB existing in myocardium, and BB existing in many tissues, especially brain.

The protein resides in the cytoplasm. It carries out the reaction creatine + ATP = N-phosphocreatine + ADP + H(+). Functionally, reversibly catalyzes the transfer of phosphate between ATP and various phosphogens (e.g. creatine phosphate). Creatine kinase isoenzymes play a central role in energy transduction in tissues with large, fluctuating energy demands, such as skeletal muscle, heart, brain and spermatozoa. This chain is Creatine kinase M-type, found in Torpedo marmorata (Marbled electric ray).